Reading from the N-terminus, the 142-residue chain is Putative pre-16S rRNA nuclease (142 aa).

This sequence belongs to the YqgF nuclease family.

The protein localises to the cytoplasm. Functionally, could be a nuclease involved in processing of the 5'-end of pre-16S rRNA. This chain is Putative pre-16S rRNA nuclease, found in Lactobacillus delbrueckii subsp. bulgaricus (strain ATCC BAA-365 / Lb-18).